Consider the following 812-residue polypeptide: Probable inorganic carbon transporter subunit DabA (812 aa).

Zn(2+) is bound by residues Cys-338, Asp-340, His-498, and Cys-513.

Belongs to the inorganic carbon transporter (TC 9.A.2) DabA family. As to quaternary structure, forms a complex with DabB. Zn(2+) serves as cofactor.

The protein localises to the cell inner membrane. In terms of biological role, part of an energy-coupled inorganic carbon pump. The sequence is that of Probable inorganic carbon transporter subunit DabA from Methylobacterium sp. (strain 4-46).